A 153-amino-acid chain; its full sequence is Endoribonuclease YbeY (153 aa).

Zn(2+) is bound by residues histidine 118, histidine 122, and histidine 128.

This sequence belongs to the endoribonuclease YbeY family. It depends on Zn(2+) as a cofactor.

It localises to the cytoplasm. Single strand-specific metallo-endoribonuclease involved in late-stage 70S ribosome quality control and in maturation of the 3' terminus of the 16S rRNA. The polypeptide is Endoribonuclease YbeY (Chloroflexus aggregans (strain MD-66 / DSM 9485)).